Here is an 80-residue protein sequence, read N- to C-terminus: Kappa-actitoxin-Avd4i (80 aa).

The signal sequence occupies residues Met-1–Ala-19. Residues Ala-20–Phe-31 constitute a propeptide that is removed on maturation. Intrachain disulfides connect Cys-41-Cys-76, Cys-43-Cys-69, and Cys-59-Cys-77.

This sequence belongs to the sea anemone type 3 (BDS) potassium channel toxin family. In terms of tissue distribution, weakly expressed in the ectodermal tissue from the distal and proximal tentacles, body wall, and oral disk.

The protein resides in the secreted. It is found in the nematocyst. In terms of biological role, blocks Kv3 voltage-gated potassium channels. Reduces blood pressure. This Anemonia viridis (Snakelocks anemone) protein is Kappa-actitoxin-Avd4i.